A 410-amino-acid polypeptide reads, in one-letter code: Aspartic proteinase Asp1 (410 aa).

An N-terminal signal peptide occupies residues M1–A23. A propeptide spans V24 to D46 (removed in mature form). The Peptidase A1 domain occupies F38–V392. Residues D56 and D257 contribute to the active site.

The protein belongs to the peptidase A1 family. As to expression, expressed in pollen, nucellus, ovary wall, shoot and root meristem, coleoptiles of immature seeds, and somatic embryos.

Possesses protease activity in vitro. This is Aspartic proteinase Asp1 (ASP1) from Oryza sativa subsp. indica (Rice).